The primary structure comprises 150 residues: Endoribonuclease YbeY (150 aa).

His-102, His-106, and His-112 together coordinate Zn(2+).

This sequence belongs to the endoribonuclease YbeY family. Requires Zn(2+) as cofactor.

It is found in the cytoplasm. Functionally, single strand-specific metallo-endoribonuclease involved in late-stage 70S ribosome quality control and in maturation of the 3' terminus of the 16S rRNA. This chain is Endoribonuclease YbeY, found in Thermotoga sp. (strain RQ2).